The sequence spans 534 residues: Peptide chain release factor 3 (534 aa).

The tr-type G domain occupies 9–278 (ARRRTFAIIS…FFIEHAPPPQ (270 aa)). GTP contacts are provided by residues 18-25 (SHPDAGKT), 86-90 (DTPGH), and 140-143 (NKLD).

The protein belongs to the TRAFAC class translation factor GTPase superfamily. Classic translation factor GTPase family. PrfC subfamily.

The protein resides in the cytoplasm. Its function is as follows. Increases the formation of ribosomal termination complexes and stimulates activities of RF-1 and RF-2. It binds guanine nucleotides and has strong preference for UGA stop codons. It may interact directly with the ribosome. The stimulation of RF-1 and RF-2 is significantly reduced by GTP and GDP, but not by GMP. This Xanthomonas oryzae pv. oryzae (strain PXO99A) protein is Peptide chain release factor 3.